A 346-amino-acid chain; its full sequence is Phosphoribosylformylglycinamidine cyclo-ligase (346 aa).

The protein belongs to the AIR synthase family.

The protein resides in the cytoplasm. The enzyme catalyses 2-formamido-N(1)-(5-O-phospho-beta-D-ribosyl)acetamidine + ATP = 5-amino-1-(5-phospho-beta-D-ribosyl)imidazole + ADP + phosphate + H(+). It functions in the pathway purine metabolism; IMP biosynthesis via de novo pathway; 5-amino-1-(5-phospho-D-ribosyl)imidazole from N(2)-formyl-N(1)-(5-phospho-D-ribosyl)glycinamide: step 2/2. The sequence is that of Phosphoribosylformylglycinamidine cyclo-ligase from Polaromonas sp. (strain JS666 / ATCC BAA-500).